Consider the following 518-residue polypeptide: Homoserine O-acetyltransferase (518 aa).

The AB hydrolase-1 domain occupies Asn-69 to Leu-468. Residue Ser-182 is part of the active site. Ser-182 serves as the catalytic Nucleophile. The disordered stretch occupies residues Arg-267–Pro-365. The segment covering Pro-290–Arg-303 has biased composition (basic and acidic residues). The span at Arg-310–Pro-341 shows a compositional bias: low complexity. Residues Asp-435 and His-464 contribute to the active site.

This sequence belongs to the AB hydrolase superfamily. MetX family.

The enzyme catalyses L-homoserine + acetyl-CoA = O-acetyl-L-homoserine + CoA. It participates in amino-acid biosynthesis; L-methionine biosynthesis via de novo pathway; O-acetyl-L-homoserine from L-homoserine: step 1/1. Its function is as follows. Commits homoserine to the methionine biosynthesis pathway by catalyzing its O-acetylation. In Ascobolus immersus, this protein is Homoserine O-acetyltransferase (MET2).